The primary structure comprises 283 residues: MIRWLTLSSRHRAAARRGWLSAHKWWLLRRCCQIAALAAFMSGPLAGYWIMRGNFASSEMLGVLGLSDPYILLQSAFAGWPVAAPALVGALLIGLFYLLVGGRVYCSFVCPVNIVTDTAHWLREKTGLTRDRKLDRRTRLWLLLGTLLAAALTGTIAWEYVNPVSMMQRGLIFGAGLGWSIVLLVFLLDLFVSRRAWCSHLCPVGAFYGLVGRFSLVRVSARNRDACDNCGACFSTCPEPHVIVPALKGEGSPLILSGDCINCGGCIDSCPNRVFAMASRLRP.

4Fe-4S ferredoxin-type domains are found at residues 217-248 (VRVSARNRDACDNCGACFSTCPEPHVIVPALK) and 251-280 (GSPLILSGDCINCGGCIDSCPNRVFAMASR). Residues Cys-227, Cys-230, Cys-233, Cys-237, Cys-260, Cys-263, Cys-266, and Cys-270 each contribute to the [4Fe-4S] cluster site.

Its pathway is one-carbon metabolism; methylamine degradation. In terms of biological role, involved in electron transfer. This chain is Methylamine utilization ferredoxin-type protein MauN (mauN), found in Paracoccus denitrificans (strain Pd 1222).